The following is a 437-amino-acid chain: Asparagine--tRNA ligase (437 aa).

Belongs to the class-II aminoacyl-tRNA synthetase family. In terms of assembly, homodimer.

It localises to the cytoplasm. The enzyme catalyses tRNA(Asn) + L-asparagine + ATP = L-asparaginyl-tRNA(Asn) + AMP + diphosphate + H(+). This chain is Asparagine--tRNA ligase, found in Symbiobacterium thermophilum (strain DSM 24528 / JCM 14929 / IAM 14863 / T).